A 154-amino-acid polypeptide reads, in one-letter code: Regulatory protein RecX (154 aa).

This sequence belongs to the RecX family.

The protein resides in the cytoplasm. Modulates RecA activity. The polypeptide is Regulatory protein RecX (Trichlorobacter lovleyi (strain ATCC BAA-1151 / DSM 17278 / SZ) (Geobacter lovleyi)).